We begin with the raw amino-acid sequence, 427 residues long: Caspase recruitment domain-containing protein 8 (427 aa).

Residues Met1–Ile23 form a disordered region. Residues Phe51 to Phe186 are ZU5. The FIIND domain maps to Phe51 to Pro336. The UPA stretch occupies residues Ser187 to Pro336. The 91-residue stretch at Pro336 to Ser426 folds into the CARD domain.

Interacts with DPP9; leading to inhibit activation of the inflammasome. DPP9 acts via formation of a ternary complex, composed of a DPP9 homodimer, one full-length CARD8 protein, and one cleaved C-terminus of CARD8 (Caspase recruitment domain-containing protein 8, C-terminus). Interacts with DPP8; leading to inhibit activation of the inflammasome, probably via formation of a ternary complex with DPP8. Interacts with NLRP3. Interacts with IKBKG/NEMO. Interacts with DRAL. Binds to caspase-1 (CASP1), CARD16/pseudo-ICE and CARD18/ICEBERG. Interacts with NLRP2 (via NACHT domain). As to quaternary structure, interacts with the C-terminal part of CARD8 (Caspase recruitment domain-containing protein 8, C-terminus) in absence of pathogens and other damage-associated signals. In terms of assembly, interacts with the N-terminal part of CARD8 (Caspase recruitment domain-containing protein 8, N-terminus) in absence of pathogens and other damage-associated signals. Homomultimer; forms the CARD8 inflammasome polymeric complex, a filament composed of homopolymers of this form in response to pathogens and other damage-associated signals. The CARD8 inflammasome polymeric complex directly recruits pro-caspase-1 (proCASP1) independently of PYCARD/ASC. Interacts (via CARD domain) with CASP1 (via CARD domain); leading to CASP1 activation. Undergoes autocatalytic processing within the FIIND domain to generate the N-terminal and C-terminal parts, which are associated non-covalently in absence of pathogens and other damage-associated signals. Post-translationally, ubiquitinated by the N-end rule pathway in response to pathogens and other damage-associated signals, leading to its degradation by the proteasome and subsequent release of the cleaved C-terminal part of the protein (Caspase recruitment domain-containing protein 8, C-terminus), which polymerizes and forms the CARD8 inflammasome.

The protein localises to the cytoplasm. It localises to the nucleus. Its subcellular location is the inflammasome. CARD8 inflammasome is inhibited by DPP8 and DPP9, which sequester the C-terminal fragment of CARD8 (Caspase recruitment domain-containing protein 8, C-terminus) in a ternary complex, thereby preventing CARD8 oligomerization and activation. CARD8 inflammasome is activated by Val-boroPro (Talabostat, PT-100), an inhibitor of dipeptidyl peptidases DPP8 and DPP9. Val-boroPro relieves inhibition of DPP8 and/or DPP9 by inducing the proteasome-mediated destruction of the N-terminal part of CARD8, releasing its C-terminal part from autoinhibition. Inflammasome sensor, which mediates inflammasome activation in response to various pathogen-associated signals, leading to subsequent pyroptosis of CD4(+) T-cells and macrophages. Inflammasomes are supramolecular complexes that assemble in the cytosol in response to pathogens and other damage-associated signals and play critical roles in innate immunity and inflammation. Acts as a recognition receptor (PRR): recognizes specific pathogens and other damage-associated signals, such as Val-boroPro inhibitor, and mediates CARD8 inflammasome activation. In response to pathogen-associated signals, the N-terminal part of CARD8 is degraded by the proteasome, releasing the cleaved C-terminal part of the protein (Caspase recruitment domain-containing protein 8, C-terminus), which polymerizes to initiate the formation of the inflammasome complex: the CARD8 inflammasome directly recruits pro-caspase-1 (proCASP1) independently of PYCARD/ASC and promotes caspase-1 (CASP1) activation, which subsequently cleaves and activates inflammatory cytokines IL1B and IL18 and gasdermin-D (GSDMD), leading to pyroptosis. Also acts as a negative regulator of the NLRP3 inflammasome. May also act as an inhibitor of NF-kappa-B activation. In terms of biological role, constitutes the precursor of the CARD8 inflammasome, which mediates autoproteolytic processing within the FIIND domain to generate the N-terminal and C-terminal parts, which are associated non-covalently in absence of pathogens and other damage-associated signals. Functionally, regulatory part that prevents formation of the CARD8 inflammasome: in absence of pathogens and other damage-associated signals, interacts with the C-terminal part of CARD8 (Caspase recruitment domain-containing protein 8, C-terminus), preventing activation of the CARD8 inflammasome. In response to pathogen-associated signals, this part is ubiquitinated by the N-end rule pathway and degraded by the proteasome, releasing the cleaved C-terminal part of the protein, which polymerizes and forms the CARD8 inflammasome. Its function is as follows. Constitutes the active part of the CARD8 inflammasome. In absence of pathogens and other damage-associated signals, interacts with the N-terminal part of CARD8 (Caspase recruitment domain-containing protein 8, N-terminus), preventing activation of the CARD8 inflammasome. In response to pathogen-associated signals, the N-terminal part of CARD8 is degraded by the proteasome, releasing this form, which polymerizes to form the CARD8 inflammasome complex: the CARD8 inflammasome complex then directly recruits pro-caspase-1 (proCASP1) and promotes caspase-1 (CASP1) activation, leading to gasdermin-D (GSDMD) cleavage and subsequent pyroptosis. In Pongo abelii (Sumatran orangutan), this protein is Caspase recruitment domain-containing protein 8.